The following is a 464-amino-acid chain: MGNLLGGVSFREPTTVEDCDSTWQTDSEPEPEQPGPAGGGEGQQHDEPEQPKQPPERAGGRPRASPVPEDHAEAAGAEQGGESTEGNAKPKRSFYAARDLYKYRHQYPNFKDIRYQNDLSNLRFYKNKIPFKPDGVYIEEVLNKWKGDYEKLEHNHTYIQWLFPLREQGLNFYAKELTTYEIEEFKKTKEAIRRFLLAYKMMLEFFGIKLIDKTGNVARAGNWQERFQHLNESQHNYLRITRILKSLGELGYESFKSPLVKFILHEALVENTIPNIKQSALEYFVYTIRDRRERRKLLRFAQKHYTPSENFIWGPPKKELPERSKAQKTPTLPASGSNGQTSTHKKSKDSKISPGASHVNSKSVEEKKGASREPGEEADKPSPEPGSGDPKPRNTEKDSAADQSDSPPEKTVPDTAGKGECPTSSEKDGEGEDQSKDSENPENAGCHAEVVAQQNATNPQTSSG.

Disordered regions lie at residues 1-91 (MGNL…AKPK) and 309-464 (ENFI…TSSG). A compositionally biased stretch (basic and acidic residues) spans 43 to 59 (QQHDEPEQPKQPPERAG). The segment covering 74–86 (AAGAEQGGESTEG) has biased composition (low complexity). Residues 316–325 (PKKELPERSK) show a composition bias toward basic and acidic residues. Positions 327–342 (QKTPTLPASGSNGQTS) are enriched in polar residues. 3 stretches are compositionally biased toward basic and acidic residues: residues 363–382 (SVEE…DKPS), 390–400 (PKPRNTEKDSA), and 425–439 (SEKD…KDSE). Over residues 452–464 (AQQNATNPQTSSG) the composition is skewed to polar residues.

This sequence belongs to the opioid growth factor receptor family.

The protein is Opioid growth factor receptor-like protein 1 (Ogfrl1) of Mus musculus (Mouse).